Reading from the N-terminus, the 628-residue chain is Probable alpha-L-arabinofuranosidase A (628 aa).

The first 25 residues, 1–25, serve as a signal peptide directing secretion; it reads MVAFSALSGVSAVSLLLSLVQNAHG. N-linked (GlcNAc...) asparagine glycosylation is found at asparagine 36, asparagine 51, asparagine 74, asparagine 152, asparagine 171, asparagine 260, asparagine 359, asparagine 440, asparagine 493, and asparagine 610.

It belongs to the glycosyl hydrolase 51 family.

Its subcellular location is the secreted. The catalysed reaction is Hydrolysis of terminal non-reducing alpha-L-arabinofuranoside residues in alpha-L-arabinosides.. It functions in the pathway glycan metabolism; L-arabinan degradation. Its function is as follows. Alpha-L-arabinofuranosidase involved in the degradation of arabinoxylan, a major component of plant hemicellulose. Acts only on small linear 1,5-alpha-linked L-arabinofuranosyl oligosaccharides. This Aspergillus niger (strain ATCC MYA-4892 / CBS 513.88 / FGSC A1513) protein is Probable alpha-L-arabinofuranosidase A (abfA).